The chain runs to 109 residues: Elicitor peptide 2 (109 aa).

The propeptide occupies 1–73; that stretch reads MEKLDKRREE…KDDDVVVLLR (73 aa). Positions 74–88 are enriched in basic and acidic residues; sequence DNKAKSKKRDKEKPS. A disordered region spans residues 74–109; that stretch reads DNKAKSKKRDKEKPSSGRPGQTNSVPNAAIQVYKED.

It belongs to the brassicaceae elicitor peptide family.

Elicitor of plant defense. The sequence is that of Elicitor peptide 2 (PEP2) from Arabidopsis thaliana (Mouse-ear cress).